Consider the following 95-residue polypeptide: PTKMTRRTEPASSCSTGSLDCCNSSGDATDTSITTLLAGIGLPIGSVTGLVGVTCSPITGIGLGGSGCSSEALCCSNNSFKGLVALGCVPVDLSL.

Disulfide bonds link C14–C74, C21–C68, C22–C55, and C75–C88. 2 N-linked (GlcNAc...) asparagine glycosylation sites follow: N23 and N77.

Belongs to the fungal hydrophobin family. As to quaternary structure, self-assembles to form functional amyloid fibrils called rodlets. Self-assembly into fibrillar rodlets occurs spontaneously at hydrophobic:hydrophilic interfaces and the rodlets further associate laterally to form amphipathic monolayers.

It is found in the secreted. Its subcellular location is the cell wall. Functionally, aerial growth, conidiation, and dispersal of filamentous fungi in the environment rely upon a capability of their secreting small amphipathic proteins called hydrophobins (HPBs) with low sequence identity. Class I can self-assemble into an outermost layer of rodlet bundles on aerial cell surfaces, conferring cellular hydrophobicity that supports fungal growth, development and dispersal; whereas Class II form highly ordered films at water-air interfaces through intermolecular interactions but contribute nothing to the rodlet structure. The polypeptide is Class I hydrophobin 13 (Pleurotus ostreatus (strain PC15) (Oyster mushroom)).